A 550-amino-acid polypeptide reads, in one-letter code: CTP synthase (550 aa).

The tract at residues 1 to 271 (MTRYIFITGG…DAEVLDVFGM (271 aa)) is amidoligase domain. Serine 13 is a binding site for CTP. UTP is bound at residue serine 13. 14–19 (SLGKGL) is an ATP binding site. Tyrosine 54 is an L-glutamine binding site. Position 71 (aspartate 71) interacts with ATP. Mg(2+) is bound by residues aspartate 71 and glutamate 145. CTP-binding positions include 152–154 (DIE), 192–197 (KTKPTQ), and lysine 228. UTP is bound by residues 192 to 197 (KTKPTQ) and lysine 228. Residues 297–549 (TIAVVGKYTV…IAAAKEHGRL (253 aa)) form the Glutamine amidotransferase type-1 domain. An L-glutamine-binding site is contributed by glycine 361. Cysteine 388 serves as the catalytic Nucleophile; for glutamine hydrolysis. L-glutamine is bound by residues 389–392 (FGMQ), glutamate 412, and arginine 477. Catalysis depends on residues histidine 522 and glutamate 524.

It belongs to the CTP synthase family. Homotetramer.

The catalysed reaction is UTP + L-glutamine + ATP + H2O = CTP + L-glutamate + ADP + phosphate + 2 H(+). The enzyme catalyses L-glutamine + H2O = L-glutamate + NH4(+). It carries out the reaction UTP + NH4(+) + ATP = CTP + ADP + phosphate + 2 H(+). The protein operates within pyrimidine metabolism; CTP biosynthesis via de novo pathway; CTP from UDP: step 2/2. Allosterically activated by GTP, when glutamine is the substrate; GTP has no effect on the reaction when ammonia is the substrate. The allosteric effector GTP functions by stabilizing the protein conformation that binds the tetrahedral intermediate(s) formed during glutamine hydrolysis. Inhibited by the product CTP, via allosteric rather than competitive inhibition. Its function is as follows. Catalyzes the ATP-dependent amination of UTP to CTP with either L-glutamine or ammonia as the source of nitrogen. Regulates intracellular CTP levels through interactions with the four ribonucleotide triphosphates. The chain is CTP synthase from Caulobacter vibrioides (strain ATCC 19089 / CIP 103742 / CB 15) (Caulobacter crescentus).